The chain runs to 350 residues: Phosphotriesterase-related protein (350 aa).

6 residues coordinate a divalent metal cation: His-24, His-26, Glu-170, His-202, His-231, and Asp-299.

The protein belongs to the metallo-dependent hydrolases superfamily. Phosphotriesterase family. It depends on a divalent metal cation as a cofactor.

This chain is Phosphotriesterase-related protein, found in Nematostella vectensis (Starlet sea anemone).